Consider the following 830-residue polypeptide: DNA gyrase subunit A (830 aa).

A Topo IIA-type catalytic domain is found at 33–497 (LPDVRDGLKP…AENDIDIEDL (465 aa)). The O-(5'-phospho-DNA)-tyrosine intermediate role is filled by Y121. Positions 524–530 (QKRGGRG) match the GyrA-box motif. Positions 805–830 (KDDSEQLEDSEEVSEVHDAEENNSEE) are disordered.

This sequence belongs to the type II topoisomerase GyrA/ParC subunit family. In terms of assembly, heterotetramer, composed of two GyrA and two GyrB chains. In the heterotetramer, GyrA contains the active site tyrosine that forms a transient covalent intermediate with DNA, while GyrB binds cofactors and catalyzes ATP hydrolysis.

It localises to the cytoplasm. The enzyme catalyses ATP-dependent breakage, passage and rejoining of double-stranded DNA.. A type II topoisomerase that negatively supercoils closed circular double-stranded (ds) DNA in an ATP-dependent manner to modulate DNA topology and maintain chromosomes in an underwound state. Negative supercoiling favors strand separation, and DNA replication, transcription, recombination and repair, all of which involve strand separation. Also able to catalyze the interconversion of other topological isomers of dsDNA rings, including catenanes and knotted rings. Type II topoisomerases break and join 2 DNA strands simultaneously in an ATP-dependent manner. The protein is DNA gyrase subunit A of Clostridium acetobutylicum (strain ATCC 824 / DSM 792 / JCM 1419 / IAM 19013 / LMG 5710 / NBRC 13948 / NRRL B-527 / VKM B-1787 / 2291 / W).